A 532-amino-acid chain; its full sequence is Glycerophosphocholine permease GIT4 (532 aa).

A run of 6 helical transmembrane segments spans residues 55–75 (LWPA…NAGI), 98–118 (NIGS…GYIS), 126–146 (GMLT…VASW), 150–170 (VQGF…AIGA), 201–221 (AMID…LWIF), and 229–249 (VWRL…FIRL). A glycan (N-linked (GlcNAc...) asparagine) is linked at Asn266. A helical membrane pass occupies residues 272 to 292 (WWLIIKFYWFRLTVVSLIWFI). A glycan (N-linked (GlcNAc...) asparagine) is linked at Asn314. Helical transmembrane passes span 321–341 (WGWS…GAFI), 349–369 (LTLA…SACL), and 375–395 (HVAG…FGPG). Asn396 carries N-linked (GlcNAc...) asparagine glycosylation. Transmembrane regions (helical) follow at residues 416–436 (GIAA…FPAI) and 450–470 (VPFY…IFFV).

The protein belongs to the major facilitator superfamily. Sugar transporter (TC 2.A.1.1) family.

It is found in the cell membrane. It carries out the reaction sn-glycerol 3-phosphocholine(out) = sn-glycerol 3-phosphocholine(in). In terms of biological role, glycerophosphodiester transporter that mediates uptake of glycerophosphocholine (GroPCho) with GIT3. Does not possess detectable glycerophosphoinositol (GroPIns) transport activity. The expanded ability to utilize GroPIns and GroPCho results from the organism's pathogenic nature and its need to occupy a variety of environments within its host organism. This possibility is buttressed by the fact that GroPIns and GroPCho are present and abundant in human fluids. The sequence is that of Glycerophosphocholine permease GIT4 from Candida albicans (strain SC5314 / ATCC MYA-2876) (Yeast).